The following is a 509-amino-acid chain: Zinc finger CCCH-type with G patch domain-containing protein (509 aa).

Residues 155–178 (PCNYYLEGECRFDEIRCRYSHGAL) form a C3H1-type zinc finger. Residues 253–277 (EEDGLTSEDSSSSPHDESSDEIDSD) are disordered. The region spanning 310–356 (TRGIGSKLMEKMGYIHGTGLGSEGRGIVTPVSAQILPQGRSLDACME) is the G-patch domain. The disordered stretch occupies residues 409–430 (GGESRHQGDQAAKKAKTNDLQQ). The span at 411–420 (ESRHQGDQAA) shows a compositional bias: basic and acidic residues.

Its subcellular location is the nucleus. Functionally, transcription repressor. The polypeptide is Zinc finger CCCH-type with G patch domain-containing protein (Drosophila persimilis (Fruit fly)).